A 363-amino-acid chain; its full sequence is MINLFLYCRAGYEKDCAAEIQQRAAELNVGGFVKTNRNDGYVIFQCFQVGDADLLAEQIELDSLIFTRQMFAANELLKDLPEGDRVTPIVDALAKVHRAGELRVETPDTNEAKELSTFCRKLTVPLRQALKRSGALLEKENPKRPIIHVCFVGPGTAYVGYSLSHNSSPYFMGIPRLKMASDAPSRSTLKLDEAFIHFIPKSEQEQRLRSGMNSVDLGACPGGWTYQLVRRGMFVAAVDNGPMAQNLMDTGQVRHYQADGFRFEPPKKNIYWLVCDMVEKPSRVAELMEAWAINGWFKEAIFNLKLPMKSRYKEVSTILATMQEVLRENGIDDFHLACKHLYHDRDEVTVHLWLKPSVGFNFG.

S-adenosyl-L-methionine contacts are provided by residues Ser-187, 220–223 (CPGG), Asp-239, Asp-259, and Asp-276. Lys-305 acts as the Proton acceptor in catalysis.

This sequence belongs to the class I-like SAM-binding methyltransferase superfamily. RNA methyltransferase RlmE family. RlmM subfamily. As to quaternary structure, monomer.

It is found in the cytoplasm. The enzyme catalyses cytidine(2498) in 23S rRNA + S-adenosyl-L-methionine = 2'-O-methylcytidine(2498) in 23S rRNA + S-adenosyl-L-homocysteine + H(+). In terms of biological role, catalyzes the 2'-O-methylation at nucleotide C2498 in 23S rRNA. The polypeptide is Ribosomal RNA large subunit methyltransferase M (Shewanella loihica (strain ATCC BAA-1088 / PV-4)).